The chain runs to 1470 residues: MSKTLKKKKHWLSKVQECAVSWAGPPGDLGAEIRGGAERGEFPYLGRLRDEPGGGGGTCCVVSGKAPSPGDVLLEVNGTPVSGLTNRDTLAVIRHFREPIRLKTVKPGKVINKDLRHYLSLQFQKGSIDHKLQQVIRDNLYLITIPCTTRAPRDGEVPGVDYNFISVEQFKALEESGALLESGTYDGNFYGTPKPPAEPSPFQPDPVDQVLFDNEFDTESQRKRTTSVSKMERMDSSLPEEEEDEDKEAVNGSGSMETREMHSESSDCWMKTVPSYNQTNRSMDFRNYMMRDENLEPLPKNWEMAYTDTGTIYFIDHNTKTTTWLDPRLCKKAKAPEDCEDGELPYGWEKIEDPQYGTYYVDHLNQKTQFENPVEEAKRKKQIGQAETHSAKTDVERAHFTRDPSQLKGVLVRASLKKSTMGFGFTIIGGDRPDEFLQVKNVLKDGPAAQDGKMAPGDVIVDINGNCVLGHTHADVVQMFQLVPVNQYVNLTLCRGYALPDDSEDPVVDIVAATPVINGQSLAKGEACMSTQDFKLGAMVLDQNGKSGKLLSSDRLNGPSDSNEQRASLASSGSSQPELVTIPLVKGPKGFGFAIADSPTGQKVKMILDSQWCQGLQKGDIIKEIYHQNVQNLTHLQVVEVLKQFPVGADVPLLILRGGPCSPTKTAKMKTDTKETSGSLETINEPTPQPMPFPPSIIRSGSPKLDPSEVYLKSKTLYEDKPPNTKDLDVFLRKQESGFGFRVLGGDGPDQSIYIGAIIPLGAAEKDGRLRAADELMCIDGIPVKGKSHKQVLDLMTTAARNGHVLLTVRRKIFYGEKQPEDESPQAFSQSGSPRLNRTELPTRSAPQESYDVILQRKENEGFGFVILTSKSKPPPGVIPHKIGRVIDGSPADRCGRLKVGDHISAVNGQSIVDLSHDNIVQLIKDAGVTVTLTVVAEEEHHGPPSGTNSARQSPALQHRPMGQAQATHIPGDRTALEGEVGKDVCSSYRHSWSDHKHLAQPDTAVISVVGSRHSQSLGCYPVELERGPRGFGFSLRGGKEYNMGLFILRLAEDGPAIKDGRIHVGDQIVEINGEPTQGITHTRAIELIQAGGNKVLLLLRPGTGLIPDHGDWDIYSPSSSNVIYDEQPPPLPSSHSAATFEESHVPVTEDSLIRVQTCEKAEELKDTVQEKKSTLNGSQPEMKYQSIQKNVSKKDPSRSHGHGDKNLLKGENGVTRRGRSASPKKSVNRHSEEHLEKIPRPLRSDPKGKSRDRSLSPRKGENKGQVTIKAGSGQDPCRKDRGRSSSPRKQQKIGGNSLSNTEGKLSEAGSRRAAGLSSDSPEQLPEGKEKSGVSRKDLKLSQLGKNRTRSPEKRSSKVDEASLPSKKTSDTASRVVSEKEKGRKPGTGERSRDKTGESVQTSAKPLTQEAGEKMALSKASEVTDRGKERAGGAPESSSPVKKAPITPGPWRVPRANKVTGTAGMADKQL.

The PDZ 1 domain maps to 18-108 (CAVSWAGPPG…PIRLKTVKPG (91 aa)). An interaction with ADRB1 and TGFA region spans residues 18–108 (CAVSWAGPPG…PIRLKTVKPG (91 aa)). Residues 116–290 (RHYLSLQFQK…RSMDFRNYMM (175 aa)) form the Guanylate kinase-like domain. 123–130 (FQKGSIDH) contacts ATP. Positions 184-266 (TYDGNFYGTP…ETREMHSESS (83 aa)) are disordered. The span at 193 to 204 (PKPPAEPSPFQP) shows a compositional bias: pro residues. S236 is modified (phosphoserine). The span at 238-247 (LPEEEEDEDK) shows a compositional bias: acidic residues. WW domains are found at residues 296 to 329 (EPLP…DPRL) and 342 to 375 (GELP…NPVE). The 83-residue stretch at 413–495 (RASLKKSTMG…NQYVNLTLCR (83 aa)) folds into the PDZ 2 domain. Positions 413–495 (RASLKKSTMG…NQYVNLTLCR (83 aa)) are interaction with PTEN. The segment at 550–575 (LLSSDRLNGPSDSNEQRASLASSGSS) is disordered. A compositionally biased stretch (polar residues) spans 559 to 575 (PSDSNEQRASLASSGSS). A PDZ 3 domain is found at 581 to 657 (TIPLVKGPKG…GADVPLLILR (77 aa)). S598 bears the Phosphoserine mark. Residues 665–700 (KTAKMKTDTKETSGSLETINEPTPQPMPFPPSIIRS) are disordered. The span at 676 to 686 (TSGSLETINEP) shows a compositional bias: polar residues. S702 is subject to Phosphoserine. One can recognise a PDZ 4 domain in the interval 729 to 811 (DVFLRKQESG…NGHVLLTVRR (83 aa)). The segment at 729–811 (DVFLRKQESG…NGHVLLTVRR (83 aa)) is interaction with ADGRB1. Residues 818-847 (KQPEDESPQAFSQSGSPRLNRTELPTRSAP) are disordered. The segment covering 826 to 847 (QAFSQSGSPRLNRTELPTRSAP) has biased composition (polar residues). Phosphoserine is present on residues S833 and S916. Positions 852–939 (DVILQRKENE…TVTLTVVAEE (88 aa)) constitute a PDZ 5 domain. The tract at residues 852-939 (DVILQRKENE…TVTLTVVAEE (88 aa)) is interaction with LPAR2 and GRIN2B. Positions 939–976 (EEHHGPPSGTNSARQSPALQHRPMGQAQATHIPGDRTA) are disordered. The segment covering 946–956 (SGTNSARQSPA) has biased composition (polar residues). One can recognise a PDZ 6 domain in the interval 1022–1104 (PVELERGPRG…KVLLLLRPGT (83 aa)). Disordered regions lie at residues 1124–1146 (IYDE…ESHV) and 1167–1470 (DTVQ…DKQL). Over residues 1175–1191 (TLNGSQPEMKYQSIQKN) the composition is skewed to polar residues. Basic and acidic residues-rich tracts occupy residues 1193–1209 (SKKD…KNLL) and 1230–1263 (RHSE…KGEN). Over residues 1285–1304 (SSSPRKQQKIGGNSLSNTEG) the composition is skewed to polar residues. S1321 carries the post-translational modification Phosphoserine. 4 stretches are compositionally biased toward basic and acidic residues: residues 1326 to 1340 (PEGK…KDLK), 1350 to 1361 (RSPEKRSSKVDE), 1377 to 1397 (VSEK…DKTG), and 1422 to 1431 (EVTDRGKERA).

This sequence belongs to the MAGUK family. Interacts with ADRB1, ADGRB1, LPAR2/EDG4, FZD4, FZD7, GRIN2B, TGFA and VANGL2. Interacts with PTEN. Interacts with ADRB1, PTPRB and unidentified tyrosine phosphorylated proteins. Interacts with DLL1. Interacts with PRRG4 (via cytoplasmic domain).

The protein resides in the cell membrane. It localises to the cell junction. Its subcellular location is the tight junction. The protein localises to the nucleus. Functionally, acts as a scaffolding protein at cell-cell junctions, thereby regulating various cellular and signaling processes. Cooperates with PTEN to modulate the kinase activity of AKT1. Its interaction with PTPRB and tyrosine phosphorylated proteins suggests that it may link receptor tyrosine phosphatase with its substrates at the plasma membrane. In polarized epithelial cells, involved in efficient trafficking of TGFA to the cell surface. Regulates the ability of LPAR2 to activate ERK and RhoA pathways. Regulates the JNK signaling cascade via its interaction with FZD4 and VANGL2. This is Membrane-associated guanylate kinase, WW and PDZ domain-containing protein 3 (Magi3) from Rattus norvegicus (Rat).